The primary structure comprises 1947 residues: Sodium channel protein type 3 subunit alpha (1947 aa).

Residues 1 to 128 are Cytoplasmic-facing; sequence MAQALLVPPG…KIAIKILVHS (128 aa). The disordered stretch occupies residues 28 to 60; it reads RAAEEKAKKPKKEQDIDDENKPKPNSDLEAGKN. The span at 46–57 shows a compositional bias: basic and acidic residues; that stretch reads ENKPKPNSDLEA. One copy of the I repeat lies at 110 to 455; that stretch reads ILTPLNPVRK…QQMLEQLKKQ (346 aa). The helical transmembrane segment at 129-146 threads the bilayer; sequence LFSMLIMCTILTNCVFMT. The Extracellular segment spans residues 147–152; that stretch reads LSNPPD. Residues 153–174 form a helical membrane-spanning segment; that stretch reads WTKNVEYTFTGIYTFESLIKIL. The Cytoplasmic portion of the chain corresponds to 175-188; it reads ARGFCLEDFTFLRD. A helical transmembrane segment spans residues 189-206; sequence PWNWLDFSVIVMAYVTEF. Topologically, residues 207 to 213 are extracellular; sequence VDLGNVS. An N-linked (GlcNAc...) asparagine glycan is attached at asparagine 211. Residues 214 to 235 form a helical membrane-spanning segment; that stretch reads ALRTFRVLRALKTISVIPGLKT. Residues 236–249 are Cytoplasmic-facing; that stretch reads IVGALIQSVKKLSD. Residues 250–269 traverse the membrane as a helical segment; sequence VMILTVFCLSVFALIGLQLF. The Extracellular portion of the chain corresponds to 270–369; it reads MGNLRNKCLQ…NYGYTSFDTF (100 aa). N-linked (GlcNAc...) asparagine glycans are attached at residues asparagine 290, asparagine 296, asparagine 302, asparagine 307, and asparagine 339. An intramembrane region (pore-forming) is located at residues 370–386; the sequence is SWAFLSLFRLMTQDYWE. At 387 to 397 the chain is on the extracellular side; it reads NLYQLTLRAAG. Residues 398–424 form a helical membrane-spanning segment; sequence KTYMIFFVLVIFLGSFYLVNLILAVVA. The Cytoplasmic segment spans residues 425-712; that stretch reads MAYEEQNQAT…LVNLIVMDPF (288 aa). Phosphoserine is present on residues serine 484, serine 485, and serine 486. Disordered regions lie at residues 493–529 and 587–632; these read SKSAKEWRNRRKKRRQREHLEGNHRPEGDRFPKSESE and VGSE…ETEV. Basic residues predominate over residues 500-509; it reads RNRRKKRRQR. 2 stretches are compositionally biased toward basic and acidic residues: residues 510 to 529 and 596 to 622; these read EHLEGNHRPEGDRFPKSESE and DEHSTFEDSESRRDSLFVPHRPGERRN. The stretch at 693–965 is one II repeat; it reads CCDSWLKVKH…QIAVGRMQKG (273 aa). A helical transmembrane segment spans residues 713–730; it reads VDLAITICIVLNTLFMAM. Residues 731 to 738 are Extracellular-facing; it reads EHYPMTEQ. Residues 739–763 traverse the membrane as a helical segment; it reads FSSVLTVGNLVFTGIFTAEMVLKII. The Cytoplasmic portion of the chain corresponds to 764 to 773; that stretch reads AMDPYYYFQE. The chain crosses the membrane as a helical span at residues 774–793; the sequence is GWNIFDGIIVSLSLMELGLA. The Extracellular segment spans residues 794–797; it reads NVEG. Residues 798-816 traverse the membrane as a helical segment; the sequence is LSVLRSFRLLRVFKLAKSW. The Cytoplasmic segment spans residues 817 to 834; the sequence is PTLNMLIKIIGNSVGALG. A helical membrane pass occupies residues 835-855; the sequence is NLTLVLAIIVFIFAVVGMQLF. The Extracellular portion of the chain corresponds to 856–880; that stretch reads GKSYKECVCKINEDCKLPRWHMNDF. An intrachain disulfide couples cysteine 864 to cysteine 870. An intramembrane region (pore-forming) is located at residues 881–896; the sequence is FHSFLIVFRVLCGEWI. Residues 897–907 are Extracellular-facing; it reads ETMWDCMEVAG. Cysteine 902 and cysteine 911 form a disulfide bridge. Residues 908-934 traverse the membrane as a helical segment; the sequence is QTMCLIVFMLVMVIGNLVVLNLFLALL. Topologically, residues 935 to 1157 are cytoplasmic; the sequence is LSSFSSDNLA…RKTCYSIVEH (223 aa). The interval 1070–1113 is disordered; that stretch reads EEFSSESELEESKEKLNATSSSEGSTVDVAPPREGEQAEIEPEE. One copy of the III repeat lies at 1140-1451; that stretch reads KGKIWWNLRK…KKYYNAMKKL (312 aa). The chain crosses the membrane as a helical span at residues 1158-1178; sequence NWFETFIVFMILLSSGALAFE. The Extracellular portion of the chain corresponds to 1179–1190; it reads DIYIEQRKTIKT. Residues 1191-1212 form a helical membrane-spanning segment; sequence MLEYADKVFTYIFILEMLLKWV. Residues 1213-1218 are Cytoplasmic-facing; it reads AYGFQT. A helical membrane pass occupies residues 1219–1244; the sequence is YFTNAWCWLDFLIVDVSLVSLVANAL. Residues 1245–1253 lie on the Extracellular side of the membrane; the sequence is GYSELGAIK. Residues 1254–1272 form a helical membrane-spanning segment; that stretch reads SLRTLRALRPLRALSRFEG. At 1273 to 1285 the chain is on the cytoplasmic side; the sequence is MRVVVNALVGAIP. The chain crosses the membrane as a helical span at residues 1286 to 1308; sequence SIMNVLLVCLIFWLIFSIMGVNL. Residues 1309–1354 are Extracellular-facing; sequence FAGKFYHCVNMTTGSMFDMSEVNNFSDCQALGKQARWKNVKVNFDN. A disulfide bridge connects residues cysteine 1316 and cysteine 1336. N-linked (GlcNAc...) asparagine glycosylation is found at asparagine 1318 and asparagine 1332. Residues 1355 to 1371 constitute an intramembrane region (pore-forming); the sequence is VGAGYLALLQVATFKGW. Topologically, residues 1372-1394 are extracellular; the sequence is MDIMYAAVDSRDVKLQPVYEENL. A helical transmembrane segment spans residues 1395-1420; that stretch reads YMYLYFVIFIIFGSFFTLNLFIGVII. Residues 1421–1478 lie on the Cytoplasmic side of the membrane; sequence DNFNQQKKKFGGQDIFMTEEQKKYYNAMKKLGSKKPQKPIPRPANKFQGMVFDFVTRQ. Phosphoserine is present on serine 1453. The IV repeat unit spans residues 1460–1758; that stretch reads IPRPANKFQG…WEKFDPDATQ (299 aa). Residues 1479–1497 form a helical membrane-spanning segment; sequence VFDISIMILICLNMVTMMV. Topologically, residues 1498–1505 are extracellular; sequence ETDDQSKY. A helical membrane pass occupies residues 1506–1529; it reads MTLVLSRINLVFIVLFTGEFLLKL. At 1530 to 1539 the chain is on the cytoplasmic side; the sequence is ISLRYYYFTI. A helical membrane pass occupies residues 1540–1557; sequence GWNIFDFVVVILSIVGMF. Over 1558-1569 the chain is Extracellular; the sequence is LAELIEKYFVSP. The chain crosses the membrane as a helical span at residues 1570 to 1592; that stretch reads TLFRVIRLARIGRILRLIKGAKG. Topologically, residues 1593–1605 are cytoplasmic; sequence IRTLLFALMMSLP. The chain crosses the membrane as a helical span at residues 1606–1629; sequence ALFNIGLLLFLVMFIYAIFGMSNF. Residues 1630-1651 are Extracellular-facing; sequence AYVKKEAGIDDMFNFETFGNSM. An intramembrane region (pore-forming) is located at residues 1652-1664; sequence ICLFQITTSAGWD. The Extracellular portion of the chain corresponds to 1665–1696; the sequence is GLLAPILNSAPPDCDPDAIHPGSSVKGDCGNP. Residues 1697–1722 form a helical membrane-spanning segment; sequence SVGIFFFVSYIIISFLVVVNMYIAVI. Topologically, residues 1723–1947 are cytoplasmic; the sequence is LENFSVATEE…PEKESKGKEV (225 aa). The region spanning 1852–1881 is the IQ domain; the sequence is EEVSAAIIQRNYRCYLLKQRLKNISNTYDK. Positions 1901–1947 are disordered; sequence LNGNSTPEKTDGSSSTTSPPSYDSVTKPDKEKFEKDKPEKESKGKEV. A compositionally biased stretch (basic and acidic residues) spans 1926 to 1947; sequence TKPDKEKFEKDKPEKESKGKEV.

It belongs to the sodium channel (TC 1.A.1.10) family. Nav1.3/SCN3A subfamily. As to quaternary structure, heterooligomer of an alpha subunit, SCN3A, and 1 to 3 regulatory beta subunits including SCN1B and SCN2B; disulfide-linked with some beta subunits like SCN2B. Interacts with NEDD4L; could regulate expression of SCN3A at the plasma membrane through ubiquitination-regulated endocytosis. In terms of processing, may be ubiquitinated by NEDD4L; which would promote its endocytosis. Phosphorylation at Ser-1453 in a highly conserved cytoplasmic loop slows inactivation of the channel and reduces peak sodium currents. Expressed in enterochromaffin cells in both colon and small bowel (at protein level). Expressed in pancreatic alpha and beta cells.

The protein resides in the cell membrane. It localises to the basal cell membrane. It carries out the reaction Na(+)(in) = Na(+)(out). Functionally, pore-forming subunit of Nav1.3, a voltage-gated sodium (Nav) channel that directly mediates the depolarizing phase of action potentials in excitable membranes. Navs, also called VGSCs (voltage-gated sodium channels) or VDSCs (voltage-dependent sodium channels), operate by switching between closed and open conformations depending on the voltage difference across the membrane. In the open conformation they allow Na(+) ions to selectively pass through the pore, along their electrochemical gradient. The influx of Na+ ions provokes membrane depolarization, initiating the propagation of electrical signals throughout cells and tissues. In some secretory cell types, it also participates in cell excitability through membrane depolarization and regulates cells responsiveness to stimuli triggering secretion. For instance, it controls the release of serotonin/5-hydroxytryptamine by enterochromaffin cells and is required for both glucagon- and glucose-induced insulin secretion in pancreatic endocrine cells. This Mus musculus (Mouse) protein is Sodium channel protein type 3 subunit alpha.